We begin with the raw amino-acid sequence, 208 residues long: Type 4 adapter protein LvgA (208 aa).

The T4BSS is a complex nanomachine composed of several subcomplexes. This subunit is part of the Type IV Coupling Complex (T4CC), a subcomplex composed of the DotLMNYZ core and the IcmSW-LvgA adapter subunits, linked by the C-terminal tail of DotL. Interacts with DotL, IcmS and IcmW. Interacts with various effector proteins, including VpdB, SetA, PieA and SidH.

It localises to the cytoplasm. Its function is as follows. Component of the Dot/Icm type IVB secretion system (T4BSS), which is used to inject bacterial effector proteins into eukaryotic host cells. Part of a subcomplex which recruits effector proteins and delivers them to the core transmembrane subcomplex. Is a critical subunit for binding a subset of effector proteins. Recognizes more than one type of binding motif. May be a critical factor that confers host specificity. This is Type 4 adapter protein LvgA from Legionella pneumophila subsp. pneumophila (strain Philadelphia 1 / ATCC 33152 / DSM 7513).